Reading from the N-terminus, the 97-residue chain is Putative septation protein SpoVG (97 aa).

The protein belongs to the SpoVG family.

Essential for sporulation. Interferes with or is a negative regulator of the pathway leading to asymmetric septation. The chain is Putative septation protein SpoVG from Bacillus cereus (strain 03BB102).